A 254-amino-acid polypeptide reads, in one-letter code: Type III pantothenate kinase (254 aa).

22-29 (VLGNTHVR) contributes to the ATP binding site. Substrate-binding positions include Tyr89 and 93–96 (GLDR). The active-site Proton acceptor is Asp95. Asp115 is a K(+) binding site. Residue Thr118 coordinates ATP. Thr173 is a binding site for substrate.

This sequence belongs to the type III pantothenate kinase family. Homodimer. The cofactor is NH4(+). K(+) serves as cofactor.

The protein localises to the cytoplasm. The enzyme catalyses (R)-pantothenate + ATP = (R)-4'-phosphopantothenate + ADP + H(+). It participates in cofactor biosynthesis; coenzyme A biosynthesis; CoA from (R)-pantothenate: step 1/5. Its function is as follows. Catalyzes the phosphorylation of pantothenate (Pan), the first step in CoA biosynthesis. This chain is Type III pantothenate kinase, found in Synechococcus sp. (strain JA-2-3B'a(2-13)) (Cyanobacteria bacterium Yellowstone B-Prime).